We begin with the raw amino-acid sequence, 338 residues long: Porphobilinogen deaminase (338 aa).

Cysteine 265 is modified (S-(dipyrrolylmethanemethyl)cysteine).

It belongs to the HMBS family. The cofactor is dipyrromethane.

It catalyses the reaction 4 porphobilinogen + H2O = hydroxymethylbilane + 4 NH4(+). It participates in porphyrin-containing compound metabolism; protoporphyrin-IX biosynthesis; coproporphyrinogen-III from 5-aminolevulinate: step 2/4. Tetrapolymerization of the monopyrrole PBG into the hydroxymethylbilane pre-uroporphyrinogen in several discrete steps. The chain is Porphobilinogen deaminase (HEM3) from Yarrowia lipolytica (strain CLIB 122 / E 150) (Yeast).